The chain runs to 496 residues: Probable cytosol aminopeptidase (496 aa).

Residues lysine 257 and aspartate 262 each contribute to the Mn(2+) site. Residue lysine 269 is part of the active site. Positions 281, 341, and 343 each coordinate Mn(2+). The active site involves arginine 345.

This sequence belongs to the peptidase M17 family. Mn(2+) is required as a cofactor.

Its subcellular location is the cytoplasm. The enzyme catalyses Release of an N-terminal amino acid, Xaa-|-Yaa-, in which Xaa is preferably Leu, but may be other amino acids including Pro although not Arg or Lys, and Yaa may be Pro. Amino acid amides and methyl esters are also readily hydrolyzed, but rates on arylamides are exceedingly low.. The catalysed reaction is Release of an N-terminal amino acid, preferentially leucine, but not glutamic or aspartic acids.. Presumably involved in the processing and regular turnover of intracellular proteins. Catalyzes the removal of unsubstituted N-terminal amino acids from various peptides. The protein is Probable cytosol aminopeptidase of Prochlorococcus marinus (strain SARG / CCMP1375 / SS120).